The sequence spans 644 residues: Exoribonuclease 2 (644 aa).

Residues arginine 189–lysine 516 enclose the RNB domain. Residues asparagine 561 to alanine 643 form the S1 motif domain.

This sequence belongs to the RNR ribonuclease family. RNase II subfamily.

The protein localises to the cytoplasm. It catalyses the reaction Exonucleolytic cleavage in the 3'- to 5'-direction to yield nucleoside 5'-phosphates.. In terms of biological role, involved in mRNA degradation. Hydrolyzes single-stranded polyribonucleotides processively in the 3' to 5' direction. The chain is Exoribonuclease 2 from Salmonella paratyphi A (strain ATCC 9150 / SARB42).